We begin with the raw amino-acid sequence, 1640 residues long: RING finger protein 17 (1640 aa).

An RING-type zinc finger spans residues 30–73; the sequence is CTRCGRKVSVASGDHHKFPCGHAFCELCLLAPQEYTTSKCTDCE. Phosphoserine is present on Ser134. Lys229 carries the post-translational modification N6-acetyllysine. Disordered stretches follow at residues 348-376 and 413-435; these read TDET…TKEM and DDPI…APVG. Positions 360–373 are enriched in basic and acidic residues; it reads APDRHLEGKKKQPT. Tudor domains lie at 751–809 and 985–1044; these read CPLQ…FLEP and KWEC…LKTM. The span at 1170 to 1184 shows a compositional bias: basic and acidic residues; sequence NEHKVPDSKGKKSES. The disordered stretch occupies residues 1170–1191; sequence NEHKVPDSKGKKSESRSTGCYR. Tudor domains lie at 1246-1303 and 1496-1556; these read SWKK…PDTP and DFSS…LMQY.

As to quaternary structure, interacts with MXD1, MXD3, MXD4, MXI1 and PIWIL1. Self-associates. Expressed at high levels in adult testis. Expressed in male germ cells (at protein level). Expressed at lower levels in adult thyroid, submaxillary gland, ovary and epididymis.

It is found in the cytoplasm. It localises to the nucleus. Functionally, seems to be involved in regulation of transcriptional activity of MYC. In vitro, inhibits DNA-binding activity of Mad-MAX heterodimers. Can recruit Mad transcriptional repressors (MXD1, MXD3, MXD4 and MXI1) to the cytoplasm. May be involved in spermiogenesis. In Mus musculus (Mouse), this protein is RING finger protein 17 (Rnf17).